The chain runs to 657 residues: Probable cobalt/nickel-exporting P-type ATPase (657 aa).

The next 5 membrane-spanning stretches (helical) occupy residues 40–60, 62–82, 101–121, 268–288, and 299–319; these read WATVALLLFLAGLVAQLNGAP, AMWWTLYLACYLAGGWGSAWA, AAVGAVAIGQIFDGALLIVIF, LGMVAATLALIVIPLMFGADL, and MIVASPCAVVLATMPPLLSAI. Catalysis depends on Asp-347, which acts as the 4-aspartylphosphate intermediate. Residues Asp-543 and Asp-547 each coordinate Mg(2+). A helical transmembrane segment spans residues 596–618; that stretch reads VVTVNLAIAATFIAVLVLWDLFG.

This sequence belongs to the cation transport ATPase (P-type) (TC 3.A.3) family. Type IB subfamily.

The protein localises to the cell membrane. Involved in heavy metal homeostasis. Probably exports nickel and cobalt ions out of the cell. The protein is Probable cobalt/nickel-exporting P-type ATPase (ctpD) of Mycobacterium bovis (strain ATCC BAA-935 / AF2122/97).